The primary structure comprises 258 residues: Spindlin-3 (258 aa).

The tract at residues 1-23 (MKTPFGKAAAGQRSRTGAGHGSV) is disordered. 3 tudor-like domain regions span residues 50–99 (VGCR…LELH), 129–178 (VGKA…YQLL), and 210–255 (VGKQ…YDLV). 2 histone H3K4me3 and H3R8me2a binding regions span residues E138 and 246–248 (DFH).

It belongs to the SPIN/STSY family. In terms of assembly, interacts with C11orf84/SPINDOC.

Exhibits H3K4me3-binding activity. In Pongo abelii (Sumatran orangutan), this protein is Spindlin-3 (SPIN3).